The following is a 457-amino-acid chain: B-cell linker protein (457 aa).

The disordered stretch occupies residues isoleucine 36–glutamine 306. A compositionally biased stretch (acidic residues) spans proline 57–asparagine 74. 5 positions are modified to phosphotyrosine; by SYK: tyrosine 72, tyrosine 84, tyrosine 96, tyrosine 178, and tyrosine 189. Residues leucine 172–glutamate 187 show a composition bias toward acidic residues. Positions asparagine 207–histidine 218 are enriched in polar residues. Positions cysteine 272–aspartate 290 are enriched in basic and acidic residues. One can recognise an SH2 domain in the interval tryptophan 347 to valine 454.

In terms of assembly, associates with PLCG1, VAV1 and NCK1 in a B-cell antigen receptor-dependent fashion. Interacts with VAV3, PLCG2 and GRB2. Interacts through its SH2 domain with CD79A. Interacts (via SH2 domain) with SYK; phosphorylated and activated by SYK. Interacts (via SH2 domain) with SCIMP; this interaction is dependent on phosphorylation of SCIMP 'Tyr-120'. In terms of processing, following BCR activation, phosphorylated on tyrosine residues by SYK and LYN. When phosphorylated, serves as a scaffold to assemble downstream targets of antigen activation, including PLCG1, VAV1, GRB2 and NCK1. Phosphorylation of Tyr-84, Tyr-178 and Tyr-189 facilitates PLCG1 binding. Phosphorylation of Tyr-72 facilitates VAV1 and NCK1 binding. Phosphorylation is required for both Ca(2+) and MAPK signaling pathways. Phosphorylation of Tyr-96 is required for the binding of BTK. Expressed in the spleen and weakly in thymus, no expression was seen in liver, testis, or brain. Expressed in B-cell lines representing different developmental stages from the pre-B to the plasma cell stage, but not in a T-cell or a fibroblast cell line.

It localises to the cytoplasm. The protein resides in the cell membrane. In terms of biological role, functions as a central linker protein, downstream of the B-cell receptor (BCR), bridging the SYK kinase to a multitude of signaling pathways and regulating biological outcomes of B-cell function and development. Plays a role in the activation of ERK/EPHB2, MAP kinase p38 and JNK. Modulates AP1 activation. Important for the activation of NF-kappa-B and NFAT. Plays an important role in BCR-mediated PLCG1 and PLCG2 activation and Ca(2+) mobilization and is required for trafficking of the BCR to late endosomes. However, does not seem to be required for pre-BCR-mediated activation of MAP kinase and phosphatidyl-inositol 3 (PI3) kinase signaling. May be required for the RAC1-JNK pathway. Plays a critical role in orchestrating the pro-B cell to pre-B cell transition. May play an important role in BCR-induced B-cell apoptosis. The protein is B-cell linker protein (Blnk) of Mus musculus (Mouse).